The following is a 393-amino-acid chain: Xylose transport system permease protein XylH (393 aa).

Topologically, residues 1 to 24 (MSKSNPSEVKLAVPTSGGFSGLKS) are periplasmic. The chain crosses the membrane as a helical span at residues 25–45 (LNLQVFVMIAAIIAIMLFFTW). Residues 46–64 (TTDGAYLSARNVSNLLRQT) are Cytoplasmic-facing. A helical membrane pass occupies residues 65–85 (AITGILAVGMVFVIISAEIDL). Residues 86–102 (SVGSMMGLLGGVAAICD) are Periplasmic-facing. Residues 103–123 (VWLGWPLPLTIIVTLVLGLLL) traverse the membrane as a helical segment. Over 124–135 (GAWNGWWVAYRK) the chain is Cytoplasmic. Residues 136-156 (VPSFIVTLAGMLAFRGILIGI) traverse the membrane as a helical segment. The Periplasmic portion of the chain corresponds to 157-175 (TNGTTVSPTSAAMSQIGQS). The helical transmembrane segment at 176–196 (YLPASTGFIIGALGLMAFVGW) threads the bilayer. Residues 197–214 (QWRGRMRRQALGLQSPAS) are Cytoplasmic-facing. A helical transmembrane segment spans residues 215–235 (TAVVGRQALTAIIVLGAIWLL). At 236 to 239 (NDYR) the chain is on the periplasmic side. A helical membrane pass occupies residues 240–260 (GVPTPVLLLTLLLLGGMFMAT). Over 261–287 (RTAFGRRIYAIGGNLEAARLSGINVER) the chain is Cytoplasmic. Residues 288–308 (TKLAVFAINGLMVAIAGLILS) form a helical membrane-spanning segment. At 309-312 (SRLG) the chain is on the periplasmic side. Residues 313–333 (AGSPSAGNIAELDAIAACVIG) traverse the membrane as a helical segment. The Cytoplasmic segment spans residues 334–336 (GTS). A helical membrane pass occupies residues 337-357 (LAGGVGSVAGAVMGAFIMASL). The Periplasmic segment spans residues 358–365 (DNGMSMMD). Residues 366-386 (VPTFWQYIVKGAILLLAVWMD) traverse the membrane as a helical segment. Topologically, residues 387 to 393 (SATKRRS) are cytoplasmic.

The protein belongs to the binding-protein-dependent transport system permease family. AraH/RbsC subfamily.

Its subcellular location is the cell inner membrane. Functionally, part of the binding-protein-dependent transport system for D-xylose. Probably responsible for the translocation of the substrate across the membrane. The sequence is that of Xylose transport system permease protein XylH (xylH) from Escherichia coli O6:H1 (strain CFT073 / ATCC 700928 / UPEC).